Here is a 195-residue protein sequence, read N- to C-terminus: Myelin-associated neurite-outgrowth inhibitor (195 aa).

At 1–18 (MNPVYSPGSSGVPYANAK) the chain is on the cytoplasmic side. The helical transmembrane segment at 19–43 (GIGYPAGFPMGYAAAAPAYSPNMYA) threads the bilayer. The Extracellular portion of the chain corresponds to 44–143 (GPNPAFQPGY…APIPQPRGNG (100 aa)). The chain crosses the membrane as a helical span at residues 144–162 (VAMGMVAGTTMAMSAGTLL). Residues 163–195 (TSHYPTPVAPHQVTMPTYRPPGTPTYSYVPPQW) lie on the Cytoplasmic side of the membrane.

It belongs to the FAM168 family.

It localises to the cytoplasm. It is found in the perinuclear region. The protein resides in the cell membrane. Its subcellular location is the cell projection. The protein localises to the axon. Its function is as follows. Inhibitor of neuronal axonal outgrowth. The protein is Myelin-associated neurite-outgrowth inhibitor (fam168b) of Xenopus tropicalis (Western clawed frog).